The chain runs to 641 residues: E3 ubiquitin-protein ligase TRIM47 (641 aa).

An RING-type zinc finger spans residues 9–58 (CPICLEPLREPVTLPCGHNFCLACLGALWPHRSAGGTGGSGGPARCPLCQ). Position 72 is a phosphothreonine (threonine 72). Positions 81–123 (QGSVPGPMSAPASGSTRGATPEPSAPSAPPPAPEPSAPCAPEQ) are disordered. Residues 103–118 (PSAPSAPPPAPEPSAP) show a composition bias toward pro residues. The B box-type zinc-finger motif lies at 181–221 (LEESLCPRHLRPLERYCRVERVCLCEACATQDHRGHELVPL). Cysteine 186, histidine 189, cysteine 208, and histidine 213 together coordinate Zn(2+). Residues 305-325 (QGDLRRQEEQRSRLSKARHNL) adopt a coiled-coil conformation. A Phosphoserine modification is found at serine 393. A disordered region spans residues 396–416 (DGLQKLGSEDVESQDPDSTSL). The region spanning 413–634 (STSLLESEAP…LQIGPLKKSC (222 aa)) is the B30.2/SPRY domain. Phosphoserine is present on serine 464. Arginine 585 is subject to Omega-N-methylarginine. Serine 591 bears the Phosphoserine mark.

Belongs to the TRIM/RBCC family. In terms of tissue distribution, expressed in hepatocytes, expression is increased in fatty livers.

It is found in the cytoplasm. Its subcellular location is the nucleus. The enzyme catalyses S-ubiquitinyl-[E2 ubiquitin-conjugating enzyme]-L-cysteine + [acceptor protein]-L-lysine = [E2 ubiquitin-conjugating enzyme]-L-cysteine + N(6)-ubiquitinyl-[acceptor protein]-L-lysine.. The protein operates within protein modification; protein ubiquitination. In terms of biological role, E3 ubiquitin-protein ligase that mediates the ubiquitination and proteasomal degradation of CYLD. This is E3 ubiquitin-protein ligase TRIM47 from Mus musculus (Mouse).